Consider the following 386-residue polypeptide: uncharacterized protein (386 aa).

It belongs to the mimivirus L17x/L18x family.

This is an uncharacterized protein from Acanthamoeba polyphaga mimivirus (APMV).